Reading from the N-terminus, the 772-residue chain is NAD(P)H-quinone oxidoreductase subunit 5, chloroplastic (772 aa).

16 consecutive transmembrane segments (helical) span residues 9-29 (WIIPFIPLPVPILIGMGLLLF), 40-60 (WSFPSILLLSMVMLLSVYLSI), 89-109 (IDPLASIMLILITTVGILVLF), 125-145 (FAYLSFFNTSMLGLVTSSNLI), 147-167 (IYIFWELVGMCSYLLIGFWFT), 185-205 (GDFGLLLGILGLYWITGSFEF), 220-240 (NQVHFLFVTLCSFLLFAGAVA), 259-279 (TPISALIHAATMVAAGIFLVA), 290-312 (YIMNLISLIGIITVLLGATLALA), 328-348 (LGYMMLALGMGSYRAALFHLI), 355-375 (ALLFLGSGSIIHSMESIVGYS), 397-417 (TAFLVGTLSLCGIPPLACFWS), 426-446 (WLYSPIFAIIACSTAGFTAFY), 550-570 (LFSLFVLVLFTLFVAAIGIPF), 604-624 (FVTNASFSVSIALLGIFIATF), and 731-751 (IFIFIFLLMDSFFTNLPFFVL).

Belongs to the complex I subunit 5 family. NDH is composed of at least 16 different subunits, 5 of which are encoded in the nucleus.

The protein localises to the plastid. Its subcellular location is the chloroplast thylakoid membrane. The catalysed reaction is a plastoquinone + NADH + (n+1) H(+)(in) = a plastoquinol + NAD(+) + n H(+)(out). It catalyses the reaction a plastoquinone + NADPH + (n+1) H(+)(in) = a plastoquinol + NADP(+) + n H(+)(out). NDH shuttles electrons from NAD(P)H:plastoquinone, via FMN and iron-sulfur (Fe-S) centers, to quinones in the photosynthetic chain and possibly in a chloroplast respiratory chain. The immediate electron acceptor for the enzyme in this species is believed to be plastoquinone. Couples the redox reaction to proton translocation, and thus conserves the redox energy in a proton gradient. This is NAD(P)H-quinone oxidoreductase subunit 5, chloroplastic (ndhF) from Oenothera argillicola (Appalachian evening primrose).